A 197-amino-acid chain; its full sequence is Predicted GPI-anchored protein 34 (197 aa).

Positions 1–20 are cleaved as a signal peptide; sequence MKFTSLICSSILLIIPTVMA. N-linked (GlcNAc...) asparagine glycans are attached at residues Asn110, Asn114, and Asn152. The GPI-anchor amidated glycine moiety is linked to residue Gly169. Positions 170–197 are cleaved as a propeptide — removed in mature form; sequence AAAMAGPVPILTNSIFTAGLLALAAVLL.

The protein resides in the cell membrane. Predicted GPI-anchored protein which may have a role during host infection. This is Predicted GPI-anchored protein 34 (PGA34) from Candida albicans (strain SC5314 / ATCC MYA-2876) (Yeast).